The sequence spans 203 residues: A-type ATP synthase subunit E (203 aa).

It belongs to the V-ATPase E subunit family. In terms of assembly, has multiple subunits with at least A(3), B(3), C, D, E, F, H, I and proteolipid K(x).

The protein localises to the cell membrane. Functionally, component of the A-type ATP synthase that produces ATP from ADP in the presence of a proton gradient across the membrane. The protein is A-type ATP synthase subunit E of Methanococcus maripaludis (strain C7 / ATCC BAA-1331).